The following is a 713-amino-acid chain: DNA polymerase eta (713 aa).

The region spanning 9 to 259 (VALVDMDCFF…MPIRKIRSLG (251 aa)) is the UmuC domain. Residues Asp13 and Met14 each coordinate Mg(2+). Mn(2+) contacts are provided by Asp13 and Met14. Residue Arg61 coordinates a 2'-deoxyribonucleoside 5'-triphosphate. Residues Asp115 and Glu116 each contribute to the Mg(2+) site. The Mn(2+) site is built by Asp115 and Glu116. Disordered regions lie at residues 441–472 (TSFLSSDPSSLPKVPVTSSEAKTQGSGPAVTA) and 495–527 (EASLSSLTAPTQAPMSNSPSKPSLPFQTSQSTG). 2 stretches are compositionally biased toward polar residues: residues 456-466 (VTSSEAKTQGS) and 497-527 (SLSSLTAPTQAPMSNSPSKPSLPFQTSQSTG). Residues 628–662 (AAEDQVPCEKCGSLVPVWDMPEHMDYHFALELQKS) form a UBZ3-type zinc finger. Cys635, Cys638, His650, and His654 together coordinate Zn(2+). A disordered region spans residues 677 to 705 (VSHQGKRNPKSPLACTNKRPRPEGMQTLE). Residues Lys682, Lys686, and Lys694 each participate in a glycyl lysine isopeptide (Lys-Gly) (interchain with G-Cter in ubiquitin) cross-link. Residues 701 to 708 (MQTLESFF) carry the PIP-box motif. Lys709 is covalently cross-linked (Glycyl lysine isopeptide (Lys-Gly) (interchain with G-Cter in ubiquitin)).

Belongs to the DNA polymerase type-Y family. As to quaternary structure, interacts with REV1. Interacts with monoubiquitinated PCNA, but not unmodified PCNA. Interacts with POLI; this interaction targets POLI to the replication machinery. Interacts with PALB2 and BRCA2; the interactions are direct and are required to sustain the recruitment of POLH at blocked replication forks and to stimulate POLH-dependent DNA synthesis on D loop substrates. Interacts (via C-terminus) with TRAIP. Interacts with ubiquitin. Interacts with POLDIP2. It depends on Mg(2+) as a cofactor. The cofactor is Mn(2+). In terms of processing, monoubiquitinated by RCHY1/PIRH2. Ubiquitination depends on integrity of the UBZ3-type zinc finger domain and is enhanced by TRAIP. Ubiquitination inhibits the ability of PolH to interact with PCNA and to bypass UV-induced lesions.

The protein localises to the nucleus. It catalyses the reaction DNA(n) + a 2'-deoxyribonucleoside 5'-triphosphate = DNA(n+1) + diphosphate. Its activity is regulated as follows. The enzyme in complex with the DNA substrate binds a third divalent metal cation. The binding of this third divalent cation, which is coordinated by water molecules and two oxygen atoms from DNA and dNTP, is essential for catalyzing the DNA synthesis. Functionally, DNA polymerase specifically involved in the DNA repair by translesion synthesis (TLS). Due to low processivity on both damaged and normal DNA, cooperates with the heterotetrameric (REV3L, REV7, POLD2 and POLD3) POLZ complex for complete bypass of DNA lesions. Inserts one or 2 nucleotide(s) opposite the lesion, the primer is further extended by the tetrameric POLZ complex. In the case of 1,2-intrastrand d(GpG)-cisplatin cross-link, inserts dCTP opposite the 3' guanine. Particularly important for the repair of UV-induced pyrimidine dimers. Although inserts the correct base, may cause base transitions and transversions depending upon the context. May play a role in hypermutation at immunoglobulin genes. Forms a Schiff base with 5'-deoxyribose phosphate at abasic sites, but does not have any lyase activity, preventing the release of the 5'-deoxyribose phosphate (5'-dRP) residue. This covalent trapping of the enzyme by the 5'-dRP residue inhibits its DNA synthetic activity during base excision repair, thereby avoiding high incidence of mutagenesis. Targets POLI to replication foci. This Homo sapiens (Human) protein is DNA polymerase eta (POLH).